We begin with the raw amino-acid sequence, 429 residues long: Probable imidazolonepropionase (429 aa).

Positions 161 and 194 each coordinate 4-imidazolone-5-propanoate. Residue tyrosine 161 coordinates N-formimidoyl-L-glutamate. Histidine 262 contacts Fe(3+). Histidine 262 contributes to the Zn(2+) binding site. Glutamate 265 lines the 4-imidazolone-5-propanoate pocket. Aspartate 336 provides a ligand contact to Fe(3+). Aspartate 336 is a Zn(2+) binding site. An N-formimidoyl-L-glutamate-binding site is contributed by asparagine 338.

It belongs to the metallo-dependent hydrolases superfamily. HutI family. Requires Zn(2+) as cofactor. It depends on Fe(3+) as a cofactor.

The catalysed reaction is 4-imidazolone-5-propanoate + H2O = N-formimidoyl-L-glutamate. It participates in amino-acid degradation; L-histidine degradation into L-glutamate; N-formimidoyl-L-glutamate from L-histidine: step 3/3. The sequence is that of Probable imidazolonepropionase (amdhd1) from Nematostella vectensis (Starlet sea anemone).